A 129-amino-acid polypeptide reads, in one-letter code: Transcription antitermination protein NusB (129 aa).

The protein belongs to the NusB family.

Its function is as follows. Involved in transcription antitermination. Required for transcription of ribosomal RNA (rRNA) genes. Binds specifically to the boxA antiterminator sequence of the ribosomal RNA (rrn) operons. The sequence is that of Transcription antitermination protein NusB from Bacillus licheniformis (strain ATCC 14580 / DSM 13 / JCM 2505 / CCUG 7422 / NBRC 12200 / NCIMB 9375 / NCTC 10341 / NRRL NRS-1264 / Gibson 46).